A 442-amino-acid chain; its full sequence is GTPase Der (442 aa).

2 consecutive EngA-type G domains span residues alanine 2–glycine 168 and leucine 182–aspartate 356. GTP-binding positions include glycine 8 to serine 15, aspartate 55 to leucine 59, asparagine 118 to glutamate 121, glycine 188 to serine 195, aspartate 235 to methionine 239, and asparagine 301 to aspartate 304. A KH-like domain is found at leucine 357–lysine 442.

Belongs to the TRAFAC class TrmE-Era-EngA-EngB-Septin-like GTPase superfamily. EngA (Der) GTPase family. In terms of assembly, associates with the 50S ribosomal subunit.

Its function is as follows. GTPase that plays an essential role in the late steps of ribosome biogenesis. In Kosmotoga olearia (strain ATCC BAA-1733 / DSM 21960 / TBF 19.5.1), this protein is GTPase Der.